We begin with the raw amino-acid sequence, 3313 residues long: Cadherin EGF LAG seven-pass G-type receptor 3 (3313 aa).

A signal peptide spans 1–31 (MARRPLWWGLPGPSTPLLLLLLFSLFPSSRE). The Extracellular portion of the chain corresponds to 32 to 2538 (EMGGGGDQGW…RLEGDLELLA (2507 aa)). Disordered regions lie at residues 148–187 (LPLD…RNGR) and 205–269 (EPGH…RMRS). Positions 258-268 (HESRTAPERMR) are enriched in basic and acidic residues. 9 consecutive Cadherin domains span residues 317–424 (PQYN…APVF), 425–536 (EQAQ…APQF), 537–642 (SEKR…SPIF), 643–747 (VSTP…RPEF), 748–849 (TMKE…RPVF), 850–952 (QSAH…APQF), 953–1058 (VASH…APVF), 1059–1160 (PAEE…SPVL), and 1161–1257 (NNFQ…VVII). The N-linked (GlcNAc...) asparagine glycan is linked to Asn-623. Asn-838 carries an N-linked (GlcNAc...) asparagine glycan. N-linked (GlcNAc...) asparagine glycosylation is found at Asn-1173, Asn-1213, Asn-1308, and Asn-1318. In terms of domain architecture, EGF-like 1; calcium-binding spans 1366-1424 (DDNVCLREPCENYMKCVSVLRFDSSAPFLASASTLFRPIQPIAGLRCRCPPGFTGDFCE). Disulfide bonds link Cys-1370/Cys-1381, Cys-1375/Cys-1412, Cys-1414/Cys-1423, Cys-1430/Cys-1441, Cys-1435/Cys-1450, Cys-1452/Cys-1461, Cys-1470/Cys-1481, Cys-1475/Cys-1491, and Cys-1493/Cys-1504. An EGF-like 2; calcium-binding domain is found at 1426-1462 (ELDLCYSNPCRNGGACARREGGYTCVCRPRFTGEDCE). The EGF-like 3; calcium-binding domain maps to 1466-1505 (EAGRCVPGVCRNGGTCTNAPNGGFRCQCPAGGAFEGPRCE). In terms of domain architecture, Laminin G-like 1 spans 1506–1710 (VAARSFPPSS…VANNGTTAGC (205 aa)). N-linked (GlcNAc...) asparagine glycosylation is found at Asn-1640 and Asn-1704. 4 disulfide bridges follow: Cys-1684–Cys-1710, Cys-1717–Cys-1728, Cys-1722–Cys-1737, and Cys-1739–Cys-1748. The EGF-like 4; calcium-binding domain maps to 1713 to 1749 (KSHFCASGPCKNGGLCSERWGGFSCDCPVGFGGKDCR). The Laminin G-like 2 domain occupies 1753-1935 (AHPYHFQGNG…SHRINVEPGC (183 aa)). The N-linked (GlcNAc...) asparagine glycan is linked to Asn-1761. Intrachain disulfides connect Cys-1906–Cys-1935, Cys-1941–Cys-1952, Cys-1946–Cys-1961, Cys-1963–Cys-1972, Cys-1976–Cys-1987, Cys-1981–Cys-1999, Cys-2001–Cys-2010, Cys-2018–Cys-2031, and Cys-2033–Cys-2043. Residues 1937–1972 (VTNPCASGPCPPHANCKDLWQTFSCTCWPGYYGPGC) enclose the EGF-like 5; calcium-binding domain. At Asp-1954 the chain carries (3R)-3-hydroxyaspartate. An EGF-like 6; calcium-binding domain is found at 1973-2011 (VDACLLNPCQNQGSCRHLQGGPHGYTCDCASGYFGQHCE). Residues 2012–2044 (HRMDQQCPRGWWGSPTCGPCNCDVHKGFDPNCN) form the EGF-like 7; calcium-binding domain. N-linked (GlcNAc...) asparagine glycosylation occurs at Asn-2044. Positions 2046–2081 (TSGQCHCKEFHYRPRGSDSCLPCDCYPVGSTSRSCA) constitute an EGF-like 8; calcium-binding domain. 5 cysteine pairs are disulfide-bonded: Cys-2050/Cys-2065, Cys-2052/Cys-2068, Cys-2070/Cys-2080, Cys-2089/Cys-2098, and Cys-2101/Cys-2113. The 48-residue stretch at 2068–2115 (CDCYPVGSTSRSCAPHSGQCPCRPGALGRQCNSCDSPFAEVTASGCRV) folds into the Laminin EGF-like domain. A Phosphotyrosine modification is found at Tyr-2117. Residues Asn-2173, Asn-2192, Asn-2382, Asn-2472, and Asn-2504 are each glycosylated (N-linked (GlcNAc...) asparagine). The disordered stretch occupies residues 2356-2395 (HTHVLLPSQSPQPSPSEVLPTSSNAENATASGVVSPPAPL). One can recognise a GAIN-B domain in the interval 2364–2528 (QSPQPSPSEV…GVLMDASPRE (165 aa)). Residues 2374 to 2387 (LPTSSNAENATASG) show a composition bias toward polar residues. Intrachain disulfides connect Cys-2478–Cys-2510 and Cys-2498–Cys-2512. Residues 2478–2528 (CVQWDPPGPADQHGMWTARDCELVHRNGSHARCRCSRTGTFGVLMDASPRE) are GPS. A helical membrane pass occupies residues 2539-2559 (VFTHVVVAASVTALVLTAAVL). At 2560–2570 (LSLRSLKSNVR) the chain is on the cytoplasmic side. The chain crosses the membrane as a helical span at residues 2571–2591 (GIHANVAAALGVAELLFLLGI). Topologically, residues 2592-2599 (HRTHNQLL) are extracellular. A helical transmembrane segment spans residues 2600 to 2620 (CTVVAILLHYFFLSTFAWLLV). At 2621–2641 (QGLHLYRMQVEPRNVDRGAMR) the chain is on the cytoplasmic side. The chain crosses the membrane as a helical span at residues 2642 to 2662 (FYHALGWGVPAVLLGLAVGLD). The Extracellular segment spans residues 2663-2679 (PEGYGNPDFCWISIHEP). The chain crosses the membrane as a helical span at residues 2680 to 2700 (LIWSFAGPIVLVIVMNGIMFL). Over 2701-2724 (LAARTSCSTGQREAKKTSVLRTLR) the chain is Cytoplasmic. The chain crosses the membrane as a helical span at residues 2725-2745 (SSFLLLLLVSASWLFGLLAVN). Over 2746 to 2752 (HSVLAFH) the chain is Extracellular. The helical transmembrane segment at 2753–2773 (YLHAGLCGLQGLAVLLLFCVL) threads the bilayer. At 2774–3313 (NADARAAWTP…SEVPRSEGHS (540 aa)) the chain is on the cytoplasmic side. Disordered regions lie at residues 2887-2927 (AGAD…RPLR) and 2977-3004 (SNKD…RAQR). Over residues 2889-2899 (ADSDSDSDLSL) the composition is skewed to acidic residues. Basic residues predominate over residues 2918–2927 (TRGRFQRPLR). Tyr-3050 carries the post-translational modification Phosphotyrosine. Disordered stretches follow at residues 3091–3242 (APVL…PSTE) and 3255–3313 (NSSA…EGHS). Ser-3098 is subject to Phosphoserine. Residues 3102–3119 (SQERLDTAPARLEPRDRG) show a composition bias toward basic and acidic residues. 2 stretches are compositionally biased toward low complexity: residues 3178–3197 (QRPL…SLSR) and 3255–3289 (NSSA…PSTP). The segment covering 3290-3301 (RSATSHSISELS) has biased composition (polar residues).

This sequence belongs to the G-protein coupled receptor 2 family. LN-TM7 subfamily. In terms of processing, the iron and 2-oxoglutarate dependent 3-hydroxylation of aspartate and asparagine is (R) stereospecific within EGF domains. Expressed in the brain. Expressed in cerebellum, olfactory bulb, cerebral cortex, hippocampus and brain stem.

Its subcellular location is the cell membrane. Functionally, receptor that may have an important role in cell/cell signaling during nervous system formation. This is Cadherin EGF LAG seven-pass G-type receptor 3 (Celsr3) from Rattus norvegicus (Rat).